A 30-amino-acid polypeptide reads, in one-letter code: Conotoxin TVIIA (30 aa).

3 disulfide bridges follow: Cys2-Cys14, Cys9-Cys19, and Cys13-Cys24. 2 positions are modified to 4-hydroxyproline: Pro10 and Pro11.

Three different forms of TVIIA exist. Pro-10 and Pro-11 of conotoxin TVIIA are hydroxylated in TVIIA, whereas Pro-10 is not hydroxylated in [Pro10]TVIIA and neither Pro-10 nor Pro-11 are hydroxylated in [Pro10,11]TVIIA. As to expression, expressed by the venom duct.

Its subcellular location is the secreted. Functionally, by structural similarity with conotoxin GS, may inhibit the sodium channel (Nav). No effect was observed upon intracranial injections into mice and intraperitoneal injections into goldfish (25 ug). This chain is Conotoxin TVIIA, found in Conus tulipa (Fish-hunting cone snail).